The primary structure comprises 387 residues: Probable purine permease 6 (387 aa).

The segment at 1 to 24 is disordered; that stretch reads MMELESETQELHLHVNGEPEGKFS. Positions 9-24 are enriched in basic and acidic residues; it reads QELHLHVNGEPEGKFS. The next 10 helical transmembrane spans lie at 36-56, 68-88, 106-126, 129-149, 162-182, 201-221, 238-258, 283-303, 309-329, and 333-353; these read LRVS…TLLG, WLET…YYYL, FLTL…HCIL, FGLL…QLAF, ITPF…LLVI, YVIG…VLSL, ILDM…VGLF, INIG…GLII, FSNV…VVFF, and MSGI…SYGY. The interval 362–387 is disordered; that stretch reads PEEDQELPQSKEEEEQKQVDTIHVQA. A compositionally biased stretch (basic and acidic residues) spans 370–381; that stretch reads QSKEEEEQKQVD.

The protein belongs to the purine permeases (TC 2.A.7.14) family.

It localises to the membrane. This chain is Probable purine permease 6 (PUP6), found in Arabidopsis thaliana (Mouse-ear cress).